Here is a 1432-residue protein sequence, read N- to C-terminus: ABC transporter asL7 (1432 aa).

Residues M1 to T20 show a composition bias toward polar residues. The interval M1 to P36 is disordered. An ABC transporter 1 domain is found at L91–S341. N265 carries N-linked (GlcNAc...) asparagine glycosylation. 6 helical membrane-spanning segments follow: residues P450–F470, V484–L504, V530–F550, G559–F579, M597–I617, and I702–Y722. One can recognise an ABC transporter 2 domain in the interval F786 to A1029. G822 to T829 lines the ATP pocket. Residue N1017 is glycosylated (N-linked (GlcNAc...) asparagine). A disordered region spans residues L1076 to E1095. 6 helical membrane passes run F1135–S1155, V1166–I1186, I1215–L1235, L1251–I1271, A1279–I1299, and L1317–A1337. N-linked (GlcNAc...) asparagine glycosylation is present at N1371. The chain crosses the membrane as a helical span at residues F1402–V1422.

This sequence belongs to the ABC transporter superfamily. ABCG family. PDR (TC 3.A.1.205) subfamily.

The protein localises to the cell membrane. Its function is as follows. ABC transporter; part of the gene cluster that mediates the biosynthesis of xenovulene A, an unusual meroterpenoid that has potent inhibitory effects on the human gamma-aminobutyrate A (GABAA) benzodiazepine receptor. The sequence is that of ABC transporter asL7 from Sarocladium schorii (Acremonium strictum (strain IMI 501407)).